A 278-amino-acid chain; its full sequence is 4-deoxy-L-threo-5-hexosulose-uronate ketol-isomerase (278 aa).

Zn(2+)-binding residues include histidine 196, histidine 198, glutamate 203, and histidine 245.

This sequence belongs to the KduI family. It depends on Zn(2+) as a cofactor.

It carries out the reaction 5-dehydro-4-deoxy-D-glucuronate = 3-deoxy-D-glycero-2,5-hexodiulosonate. It functions in the pathway glycan metabolism; pectin degradation; 2-dehydro-3-deoxy-D-gluconate from pectin: step 4/5. Its function is as follows. Catalyzes the isomerization of 5-dehydro-4-deoxy-D-glucuronate to 3-deoxy-D-glycero-2,5-hexodiulosonate. The polypeptide is 4-deoxy-L-threo-5-hexosulose-uronate ketol-isomerase (Burkholderia cenocepacia (strain ATCC BAA-245 / DSM 16553 / LMG 16656 / NCTC 13227 / J2315 / CF5610) (Burkholderia cepacia (strain J2315))).